A 324-amino-acid chain; its full sequence is Phospho-N-acetylmuramoyl-pentapeptide-transferase (324 aa).

9 consecutive transmembrane segments (helical) span residues 13-33 (VLSA…IFIP), 57-77 (GTPT…MLII), 85-105 (GMIV…DDIL), 121-141 (MILL…NIGT), 143-163 (IIIP…PLVV), 179-199 (IDGL…IVGF), 201-221 (TGHY…LGFL), 238-260 (LALG…IIIV), and 303-323 (VKLV…GFIA).

It belongs to the glycosyltransferase 4 family. MraY subfamily. It depends on Mg(2+) as a cofactor.

The protein resides in the cell membrane. It carries out the reaction UDP-N-acetyl-alpha-D-muramoyl-L-alanyl-gamma-D-glutamyl-meso-2,6-diaminopimeloyl-D-alanyl-D-alanine + di-trans,octa-cis-undecaprenyl phosphate = di-trans,octa-cis-undecaprenyl diphospho-N-acetyl-alpha-D-muramoyl-L-alanyl-D-glutamyl-meso-2,6-diaminopimeloyl-D-alanyl-D-alanine + UMP. The protein operates within cell wall biogenesis; peptidoglycan biosynthesis. In terms of biological role, catalyzes the initial step of the lipid cycle reactions in the biosynthesis of the cell wall peptidoglycan: transfers peptidoglycan precursor phospho-MurNAc-pentapeptide from UDP-MurNAc-pentapeptide onto the lipid carrier undecaprenyl phosphate, yielding undecaprenyl-pyrophosphoryl-MurNAc-pentapeptide, known as lipid I. The polypeptide is Phospho-N-acetylmuramoyl-pentapeptide-transferase (Clostridium botulinum (strain Eklund 17B / Type B)).